Reading from the N-terminus, the 529-residue chain is Peptide chain release factor 3 (529 aa).

Residues 11–280 (AKRRTFAIIS…GLVEWAPAPM (270 aa)) enclose the tr-type G domain. Residues 20 to 27 (SHPDAGKT), 88 to 92 (DTPGH), and 142 to 145 (NKLD) each bind GTP.

The protein belongs to the TRAFAC class translation factor GTPase superfamily. Classic translation factor GTPase family. PrfC subfamily.

The protein resides in the cytoplasm. Increases the formation of ribosomal termination complexes and stimulates activities of RF-1 and RF-2. It binds guanine nucleotides and has strong preference for UGA stop codons. It may interact directly with the ribosome. The stimulation of RF-1 and RF-2 is significantly reduced by GTP and GDP, but not by GMP. In Klebsiella pneumoniae subsp. pneumoniae (strain ATCC 700721 / MGH 78578), this protein is Peptide chain release factor 3.